The primary structure comprises 273 residues: Dermonecrotic toxin LapSicTox-alphaIB2 (273 aa).

The active site involves His-5. Positions 25 and 27 each coordinate Mg(2+). The active-site Nucleophile is His-41. Disulfide bonds link Cys-45/Cys-51 and Cys-47/Cys-190. Asp-85 contributes to the Mg(2+) binding site. Asn-250 carries N-linked (GlcNAc...) asparagine glycosylation.

Belongs to the arthropod phospholipase D family. Class II subfamily. Requires Mg(2+) as cofactor. Expressed by the venom gland.

It is found in the secreted. The catalysed reaction is an N-(acyl)-sphingosylphosphocholine = an N-(acyl)-sphingosyl-1,3-cyclic phosphate + choline. It catalyses the reaction an N-(acyl)-sphingosylphosphoethanolamine = an N-(acyl)-sphingosyl-1,3-cyclic phosphate + ethanolamine. The enzyme catalyses a 1-acyl-sn-glycero-3-phosphocholine = a 1-acyl-sn-glycero-2,3-cyclic phosphate + choline. It carries out the reaction a 1-acyl-sn-glycero-3-phosphoethanolamine = a 1-acyl-sn-glycero-2,3-cyclic phosphate + ethanolamine. Functionally, dermonecrotic toxins cleave the phosphodiester linkage between the phosphate and headgroup of certain phospholipids (sphingolipid and lysolipid substrates), forming an alcohol (often choline) and a cyclic phosphate. This toxin acts on sphingomyelin (SM). It may also act on ceramide phosphoethanolamine (CPE), lysophosphatidylcholine (LPC) and lysophosphatidylethanolamine (LPE), but not on lysophosphatidylserine (LPS), and lysophosphatidylglycerol (LPG). It acts by transphosphatidylation, releasing exclusively cyclic phosphate products as second products. Induces dermonecrosis, hemolysis, increased vascular permeability, edema, inflammatory response, and platelet aggregation. This chain is Dermonecrotic toxin LapSicTox-alphaIB2, found in Loxosceles apachea (Apache recluse spider).